Here is a 161-residue protein sequence, read N- to C-terminus: uncharacterized protein (161 aa).

A run of 4 helical transmembrane segments spans residues 22–42, 43–63, 89–109, and 110–130; these read LFFI…VFGH, LTVG…ALLV, LAII…AGLG, and VVFG…LPVL. A disordered region spans residues 141 to 161; that stretch reads VATYSSNGQTGGSEGRSASDD.

The protein to M.leprae ML1138.

It localises to the cell membrane. This is an uncharacterized protein from Mycobacterium bovis (strain ATCC BAA-935 / AF2122/97).